Consider the following 155-residue polypeptide: Cell division protein SepF (155 aa).

The span at threonine 16–glutamate 35 shows a compositional bias: acidic residues. The segment at threonine 16–glutamine 44 is disordered.

The protein belongs to the SepF family. As to quaternary structure, homodimer. Interacts with FtsZ.

The protein localises to the cytoplasm. Functionally, cell division protein that is part of the divisome complex and is recruited early to the Z-ring. Probably stimulates Z-ring formation, perhaps through the cross-linking of FtsZ protofilaments. Its function overlaps with FtsA. In Acetivibrio thermocellus (strain ATCC 27405 / DSM 1237 / JCM 9322 / NBRC 103400 / NCIMB 10682 / NRRL B-4536 / VPI 7372) (Clostridium thermocellum), this protein is Cell division protein SepF.